A 201-amino-acid chain; its full sequence is 3-isopropylmalate dehydratase small subunit (201 aa).

It belongs to the LeuD family. LeuD type 1 subfamily. Heterodimer of LeuC and LeuD.

It catalyses the reaction (2R,3S)-3-isopropylmalate = (2S)-2-isopropylmalate. The protein operates within amino-acid biosynthesis; L-leucine biosynthesis; L-leucine from 3-methyl-2-oxobutanoate: step 2/4. Functionally, catalyzes the isomerization between 2-isopropylmalate and 3-isopropylmalate, via the formation of 2-isopropylmaleate. This Shewanella sp. (strain MR-4) protein is 3-isopropylmalate dehydratase small subunit.